We begin with the raw amino-acid sequence, 451 residues long: Tapasin-related protein (451 aa).

The N-terminal stretch at M1–G20 is a signal peptide. The Lumenal segment spans residues T21 to G412. The 106-residue stretch at F196–M301 folds into the Ig-like V-type domain. 2 cysteine pairs are disulfide-bonded: C217–C288 and C326–C387. N-linked (GlcNAc...) asparagine glycosylation is found at N270 and N277. Positions P302–T399 constitute an Ig-like C1-type domain. Residues T413–L433 traverse the membrane as a helical segment. The Cytoplasmic segment spans residues H434–G451.

In terms of assembly, interacts with peptide-free HLA-A*02-B2M complexes or those loaded with low affinity peptides, likely facilitating peptide exchange onto higher affinity peptides. Interacts with MR1 in a ligand-independent way; this interaction may stabilize MR1 pool and facilitate ligand loading and dissociation. Widely expressed.

It is found in the cell membrane. The protein resides in the endoplasmic reticulum membrane. It localises to the microsome membrane. The protein localises to the golgi apparatus membrane. In terms of biological role, component of the antigen processing and presentation pathway, which binds to MHC class I coupled with beta2-microglobulin/B2M. Association between TAPBPR and MHC class I occurs in the absence of a functional peptide-loading complex (PLC). Expression seems to slow down and down-regulate MHC class I surface expression. The chain is Tapasin-related protein (Tapbpl) from Mus musculus (Mouse).